A 144-amino-acid polypeptide reads, in one-letter code: Large-conductance mechanosensitive channel (144 aa).

2 helical membrane-spanning segments follow: residues 14 to 34 (VLDM…VTSF) and 81 to 101 (GTFL…FLII).

The protein belongs to the MscL family. As to quaternary structure, homopentamer.

The protein localises to the cell inner membrane. In terms of biological role, channel that opens in response to stretch forces in the membrane lipid bilayer. May participate in the regulation of osmotic pressure changes within the cell. In Bdellovibrio bacteriovorus (strain ATCC 15356 / DSM 50701 / NCIMB 9529 / HD100), this protein is Large-conductance mechanosensitive channel.